A 157-amino-acid polypeptide reads, in one-letter code: MVHPLIPQLESLARPLAARLGYELVQMVFHTNQYPPVLRVDIRPLDPEQETSHADCEAMSQALEVELDRVDLIPGHYVLEVSSPGISNLLISDRDFVVFKGFAVEVTVDPPYKGKAVWSGHLLGRDEEKVALSLKGRRVQLPRASVQRVVLSGAETE.

Belongs to the RimP family.

It is found in the cytoplasm. Its function is as follows. Required for maturation of 30S ribosomal subunits. In Synechococcus sp. (strain JA-3-3Ab) (Cyanobacteria bacterium Yellowstone A-Prime), this protein is Ribosome maturation factor RimP.